The primary structure comprises 76 residues: Acyl carrier protein (76 aa).

The 75-residue stretch at 1–75 (MVFEKIKALI…DIVFYITKNT (75 aa)) folds into the Carrier domain. An O-(pantetheine 4'-phosphoryl)serine modification is found at Ser35.

This sequence belongs to the acyl carrier protein (ACP) family. 4'-phosphopantetheine is transferred from CoA to a specific serine of apo-ACP by AcpS. This modification is essential for activity because fatty acids are bound in thioester linkage to the sulfhydryl of the prosthetic group.

Its subcellular location is the cytoplasm. The protein operates within lipid metabolism; fatty acid biosynthesis. Its function is as follows. Carrier of the growing fatty acid chain in fatty acid biosynthesis. This Onion yellows phytoplasma (strain OY-M) protein is Acyl carrier protein.